Here is a 272-residue protein sequence, read N- to C-terminus: Flagellin (272 aa).

Belongs to the bacterial flagellin family.

It localises to the secreted. The protein localises to the bacterial flagellum. Functionally, flagellin is the subunit protein which polymerizes to form the filaments of bacterial flagella. This is Flagellin (hag) from Halalkalibacterium halodurans (strain ATCC BAA-125 / DSM 18197 / FERM 7344 / JCM 9153 / C-125) (Bacillus halodurans).